The chain runs to 159 residues: MNITIVSVGKLKEKYLKQGIDEYKKRLNAYAKVSIIEVADEKAPETMSEAEMKEVKRKEGERILSSIAPDAFVITLEIEGKMLGSEQLAKKLDELATYGKSKVVFVIGGSLGISQDVQRRSDLALSFSKMTFPHQLMRLVLIEQVYRSFRINRGEPYHK.

S-adenosyl-L-methionine-binding positions include Leu76, Gly108, and 127 to 132 (FSKMTF).

It belongs to the RNA methyltransferase RlmH family. As to quaternary structure, homodimer.

The protein resides in the cytoplasm. The enzyme catalyses pseudouridine(1915) in 23S rRNA + S-adenosyl-L-methionine = N(3)-methylpseudouridine(1915) in 23S rRNA + S-adenosyl-L-homocysteine + H(+). Its function is as follows. Specifically methylates the pseudouridine at position 1915 (m3Psi1915) in 23S rRNA. The sequence is that of Ribosomal RNA large subunit methyltransferase H from Oceanobacillus iheyensis (strain DSM 14371 / CIP 107618 / JCM 11309 / KCTC 3954 / HTE831).